Consider the following 481-residue polypeptide: Protein hedgehog (481 aa).

Residue cysteine 93 is the site of N-palmitoyl cysteine attachment. Residues glutamate 157, glutamate 158, aspartate 163, threonine 193, glutamate 194, aspartate 197, and aspartate 199 each coordinate Ca(2+). Glycine 265 carries Cholesterol glycine ester lipidation.

Belongs to the hedgehog family. As to quaternary structure, interacts with shf. Post-translationally, the C-terminal part of the hedgehog protein precursor displays an autoproteolysis activity that results in the cleavage of the full-length protein into two parts (N-product and C-product). In addition, the C-terminal part displays a cholesterol transferase activity that results by the covalent attachment of a cholesterol moiety to the C-terminal of the newly generated N-product. The N-product is the active species in both local and long-range signaling, whereas the C-product has no signaling activity. In terms of processing, cholesterylation is required for N-product targeting to lipid rafts and multimerization. N-palmitoylation by Rasp of the hedgehog N-product, within the secretory pathway, is required for the embryonic and larval patterning activities of the hedgehog signal.

The protein resides in the nucleus. It is found in the cytoplasm. The protein localises to the cell membrane. The catalysed reaction is glycyl-L-cysteinyl-[protein] + cholesterol + H(+) = [protein]-C-terminal glycyl cholesterol ester + N-terminal L-cysteinyl-[protein]. Functionally, the C-terminal part of the hedgehog protein precursor displays an autoproteolysis activity that results in the cleavage of the full-length protein into two parts (N-product and C-product). In addition, the C-terminal part displays a cholesterol transferase activity that results by the covalent attachment of a cholesterol moiety to the C-terminal of the newly generated N-product. Once cleaved, the C-product has no signaling activity and diffuses from the cell. In terms of biological role, the dually lipidated hedgehog protein N-product is a morphogen which is essential for a variety of patterning events during development. Establishes the anterior-posterior axis of the embryonic segments and patterns the larval imaginal disks. Binds to the patched (ptc) receptor, which functions in association with smoothened (smo), to activate the transcription of target genes wingless (wg), decapentaplegic (dpp) and ptc. In the absence of hh, ptc represses the constitutive signaling activity of smo through fused (fu). Essential component of a signaling pathway which regulates the Duox-dependent gut immune response to bacterial uracil; required to activate Cad99C-dependent endosome formation, norpA-dependent Ca2+ mobilization and p38 MAPK, which are essential steps in the Duox-dependent production of reactive oxygen species (ROS) in response to intestinal bacterial infection. During photoreceptor differentiation, it up-regulates transcription of Ubr3, which in turn promotes the hh-signaling pathway by mediating the ubiquitination and degradation of cos. The polypeptide is Protein hedgehog (hh-1) (Drosophila pseudoobscura pseudoobscura (Fruit fly)).